A 403-amino-acid polypeptide reads, in one-letter code: Dual-specificity RNA methyltransferase RlmN (403 aa).

Glu126 acts as the Proton acceptor in catalysis. In terms of domain architecture, Radical SAM core spans 132–375; sequence ETDRGTLCVS…VRTPRGRDIL (244 aa). Cysteines 139 and 378 form a disulfide. 3 residues coordinate [4Fe-4S] cluster: Cys146, Cys150, and Cys153. Residues 204-205, Ser236, 258-260, and Asn335 contribute to the S-adenosyl-L-methionine site; these read GE and SLH. Cys378 (S-methylcysteine intermediate) is an active-site residue.

This sequence belongs to the radical SAM superfamily. RlmN family. It depends on [4Fe-4S] cluster as a cofactor.

The protein resides in the cytoplasm. It catalyses the reaction adenosine(2503) in 23S rRNA + 2 reduced [2Fe-2S]-[ferredoxin] + 2 S-adenosyl-L-methionine = 2-methyladenosine(2503) in 23S rRNA + 5'-deoxyadenosine + L-methionine + 2 oxidized [2Fe-2S]-[ferredoxin] + S-adenosyl-L-homocysteine. The catalysed reaction is adenosine(37) in tRNA + 2 reduced [2Fe-2S]-[ferredoxin] + 2 S-adenosyl-L-methionine = 2-methyladenosine(37) in tRNA + 5'-deoxyadenosine + L-methionine + 2 oxidized [2Fe-2S]-[ferredoxin] + S-adenosyl-L-homocysteine. Specifically methylates position 2 of adenine 2503 in 23S rRNA and position 2 of adenine 37 in tRNAs. m2A2503 modification seems to play a crucial role in the proofreading step occurring at the peptidyl transferase center and thus would serve to optimize ribosomal fidelity. In Bradyrhizobium sp. (strain ORS 278), this protein is Dual-specificity RNA methyltransferase RlmN.